The following is a 536-amino-acid chain: MKTVETLNEGLKREYRVTITAKDIDARVDEEVKSIAPTVRMPGFRPGKVPPNLIRKMHGAALSADALNKAIDAGVRDLMAKEKLRPALQPAVTLADGYEAGKDAELTVALEVLPEIETPSIDGLKLERLTVPADDKAVMAKIEEFAAQMKRFEEAPKTRKAATGDQVIIDFAGSVDGTPFDGGTGEDMAVEIGSGQLIPGFEDQLVGVKAGDEKTLKVTFPEDYPVETLKGKLAEFAVTVKEVKVPAATKIDDEFAKSLGLESLDKLKELMKDQVEQELNGLTRTHMKRKLLDQLAAAHDFEVPPTMVEAEFNQIWQQLEHEASHEEDPEAAKAELENDREEYRAIAVRRVRLGLLLSEIGQAHGVQVSQQEMQRLIMQAAQQYRPEDRQRFVEYVQQDALAAAQLRAPLYEDKVVDFLFEKAEITDRETTREELEAAIEADDDSGHVHGPGCGHDHDEKPAKKAAAKKPATKKEAVKDEAKAEEAPAKKAPAKKAEPKAEAKPAAAKKAAPAKAAAEEKAEPAKKAPAKKAAAKK.

The PPIase FKBP-type domain maps to 164-249 (GDQVIIDFAG…VKEVKVPAAT (86 aa)). Positions 439 to 536 (IEADDDSGHV…APAKKAAAKK (98 aa)) are disordered. The span at 472 to 502 (TKKEAVKDEAKAEEAPAKKAPAKKAEPKAEA) shows a compositional bias: basic and acidic residues. Residues 503–515 (KPAAAKKAAPAKA) show a composition bias toward low complexity. The segment covering 516-525 (AAEEKAEPAK) has biased composition (basic and acidic residues). The span at 527–536 (APAKKAAAKK) shows a compositional bias: basic residues.

The protein belongs to the FKBP-type PPIase family. Tig subfamily.

The protein localises to the cytoplasm. It catalyses the reaction [protein]-peptidylproline (omega=180) = [protein]-peptidylproline (omega=0). In terms of biological role, involved in protein export. Acts as a chaperone by maintaining the newly synthesized protein in an open conformation. Functions as a peptidyl-prolyl cis-trans isomerase. The sequence is that of Trigger factor from Sphingopyxis alaskensis (strain DSM 13593 / LMG 18877 / RB2256) (Sphingomonas alaskensis).